The following is a 141-amino-acid chain: ATP synthase epsilon chain (141 aa).

It belongs to the ATPase epsilon chain family. In terms of assembly, F-type ATPases have 2 components, CF(1) - the catalytic core - and CF(0) - the membrane proton channel. CF(1) has five subunits: alpha(3), beta(3), gamma(1), delta(1), epsilon(1). CF(0) has three main subunits: a, b and c.

It localises to the cell inner membrane. In terms of biological role, produces ATP from ADP in the presence of a proton gradient across the membrane. This is ATP synthase epsilon chain from Burkholderia ambifaria (strain ATCC BAA-244 / DSM 16087 / CCUG 44356 / LMG 19182 / AMMD) (Burkholderia cepacia (strain AMMD)).